A 155-amino-acid polypeptide reads, in one-letter code: MAKLAVIRIRGRVNVKRPVRDTLAMLRLHRVNHCVIVDDTPSYLGMLQKAKDYITWGEINAETLAKLIRKRGRLIGNKPVTDEYVKEKLGMTIEEFAQKVVNGEMSLKDLPNLKPVFRLHPPRGGFRGSKKRSFKEGGALGYRGEKINELIERML.

It belongs to the universal ribosomal protein uL30 family. In terms of assembly, part of the 50S ribosomal subunit.

In Pyrococcus furiosus (strain ATCC 43587 / DSM 3638 / JCM 8422 / Vc1), this protein is Large ribosomal subunit protein uL30.